Reading from the N-terminus, the 923-residue chain is DNA gyrase subunit A (923 aa).

Residues 34 to 534 (LPDARDGLKP…SQVDLTIADL (501 aa)) form the Topo IIA-type catalytic domain. The active-site O-(5'-phospho-DNA)-tyrosine intermediate is the Y122. Positions 561 to 567 (QRRGGKG) match the GyrA-box motif. The segment at 881-923 (ERVQEPSGGDDEDLPEGEEAAESLGESAESESEPAAEAEGNEE) is disordered. Acidic residues-rich tracts occupy residues 888–901 (GGDD…EEAA) and 908–923 (AESE…GNEE).

Belongs to the type II topoisomerase GyrA/ParC subunit family. Heterotetramer, composed of two GyrA and two GyrB chains. In the heterotetramer, GyrA contains the active site tyrosine that forms a transient covalent intermediate with DNA, while GyrB binds cofactors and catalyzes ATP hydrolysis.

The protein localises to the cytoplasm. The enzyme catalyses ATP-dependent breakage, passage and rejoining of double-stranded DNA.. Its function is as follows. A type II topoisomerase that negatively supercoils closed circular double-stranded (ds) DNA in an ATP-dependent manner to modulate DNA topology and maintain chromosomes in an underwound state. Negative supercoiling favors strand separation, and DNA replication, transcription, recombination and repair, all of which involve strand separation. Also able to catalyze the interconversion of other topological isomers of dsDNA rings, including catenanes and knotted rings. Type II topoisomerases break and join 2 DNA strands simultaneously in an ATP-dependent manner. This Pseudomonas aeruginosa (strain ATCC 15692 / DSM 22644 / CIP 104116 / JCM 14847 / LMG 12228 / 1C / PRS 101 / PAO1) protein is DNA gyrase subunit A.